A 449-amino-acid polypeptide reads, in one-letter code: Tubulin alpha-1C chain (449 aa).

Residues 1 to 4 carry the MREC motif motif; that stretch reads MREC. Residue glutamine 11 participates in GTP binding. Position 40 is an N6-acetyllysine (lysine 40). Glutamate 71, serine 140, glycine 144, threonine 145, threonine 179, asparagine 206, and asparagine 228 together coordinate GTP. Mg(2+) is bound at residue glutamate 71. The active site involves glutamate 254. Residue tyrosine 282 is modified to 3'-nitrotyrosine. The interval 429 to 449 is disordered; the sequence is EKDYEEVGADSAEGDDEGDEY. Residues 431-449 are compositionally biased toward acidic residues; the sequence is DYEEVGADSAEGDDEGDEY. At tyrosine 432 the chain carries Phosphotyrosine. Serine 439 is modified (phosphoserine). Tyrosine 449 is subject to 3'-nitrotyrosine.

It belongs to the tubulin family. Dimer of alpha and beta chains. A typical microtubule is a hollow water-filled tube with an outer diameter of 25 nm and an inner diameter of 15 nM. Alpha-beta heterodimers associate head-to-tail to form protofilaments running lengthwise along the microtubule wall with the beta-tubulin subunit facing the microtubule plus end conferring a structural polarity. Microtubules usually have 13 protofilaments but different protofilament numbers can be found in some organisms and specialized cells. The cofactor is Mg(2+). Post-translationally, some glutamate residues at the C-terminus are polyglycylated, resulting in polyglycine chains on the gamma-carboxyl group. Glycylation is mainly limited to tubulin incorporated into axonemes (cilia and flagella) whereas glutamylation is prevalent in neuronal cells, centrioles, axonemes, and the mitotic spindle. Both modifications can coexist on the same protein on adjacent residues, and lowering polyglycylation levels increases polyglutamylation, and reciprocally. Cilia and flagella glycylation is required for their stability and maintenance. Flagella glycylation controls sperm motility. Some glutamate residues at the C-terminus are polyglutamylated, resulting in polyglutamate chains on the gamma-carboxyl group. Polyglutamylation plays a key role in microtubule severing by spastin (SPAST). SPAST preferentially recognizes and acts on microtubules decorated with short polyglutamate tails: severing activity by SPAST increases as the number of glutamates per tubulin rises from one to eight, but decreases beyond this glutamylation threshold. Glutamylation is also involved in cilia motility. In terms of processing, acetylation of alpha chains at Lys-40 is located inside the microtubule lumen. This modification has been correlated with increased microtubule stability, intracellular transport and ciliary assembly. Post-translationally, methylation of alpha chains at Lys-40 is found in mitotic microtubules and is required for normal mitosis and cytokinesis contributing to genomic stability. Nitration of Tyr-449 is irreversible and interferes with normal dynein intracellular distribution. In terms of processing, undergoes a tyrosination/detyrosination cycle, the cyclic removal and re-addition of a C-terminal tyrosine residue by the enzymes tubulin tyrosine carboxypeptidase (MATCAP1, VASH1 or VASH2) and tubulin tyrosine ligase (TTL), respectively. Post-translationally, tyrosination promotes microtubule interaction with CAP-Gly domain-containing proteins such as CLIP1, CLIP2 and DCTN1. Tyrosination regulates the initiation of dynein-dynactin motility via interaction with DCTN1, which brings the dynein-dynactin complex into contact with microtubules. In neurons, tyrosinated tubulins mediate the initiation of retrograde vesicle transport. Detyrosination is involved in metaphase plate congression by guiding chromosomes during mitosis: detyrosination promotes interaction with CENPE, promoting pole-proximal transport of chromosomes toward the equator. Detyrosination increases microtubules-dependent mechanotransduction in dystrophic cardiac and skeletal muscle. In cardiomyocytes, detyrosinated microtubules are required to resist to contractile compression during contraction: detyrosination promotes association with desmin (DES) at force-generating sarcomeres, leading to buckled microtubules and mechanical resistance to contraction.

The protein localises to the cytoplasm. The protein resides in the cytoskeleton. It catalyses the reaction GTP + H2O = GDP + phosphate + H(+). In terms of biological role, tubulin is the major constituent of microtubules, a cylinder consisting of laterally associated linear protofilaments composed of alpha- and beta-tubulin heterodimers. Microtubules grow by the addition of GTP-tubulin dimers to the microtubule end, where a stabilizing cap forms. Below the cap, tubulin dimers are in GDP-bound state, owing to GTPase activity of alpha-tubulin. This Bos taurus (Bovine) protein is Tubulin alpha-1C chain (TUBA1C).